A 330-amino-acid polypeptide reads, in one-letter code: Phenylalanine--tRNA ligase alpha subunit (330 aa).

Residue glutamate 255 participates in Mg(2+) binding.

It belongs to the class-II aminoacyl-tRNA synthetase family. Phe-tRNA synthetase alpha subunit type 1 subfamily. Tetramer of two alpha and two beta subunits. It depends on Mg(2+) as a cofactor.

Its subcellular location is the cytoplasm. The enzyme catalyses tRNA(Phe) + L-phenylalanine + ATP = L-phenylalanyl-tRNA(Phe) + AMP + diphosphate + H(+). This Acinetobacter baumannii (strain AYE) protein is Phenylalanine--tRNA ligase alpha subunit.